A 217-amino-acid polypeptide reads, in one-letter code: UPF0111 protein MTH_1689 (217 aa).

It belongs to the UPF0111 family.

The chain is UPF0111 protein MTH_1689 from Methanothermobacter thermautotrophicus (strain ATCC 29096 / DSM 1053 / JCM 10044 / NBRC 100330 / Delta H) (Methanobacterium thermoautotrophicum).